A 415-amino-acid chain; its full sequence is Serine hydroxymethyltransferase (415 aa).

Residues leucine 117 and glycine 121–leucine 123 each bind (6S)-5,6,7,8-tetrahydrofolate. Residue lysine 226 is modified to N6-(pyridoxal phosphate)lysine.

This sequence belongs to the SHMT family. Homodimer. Pyridoxal 5'-phosphate serves as cofactor.

It localises to the cytoplasm. The catalysed reaction is (6R)-5,10-methylene-5,6,7,8-tetrahydrofolate + glycine + H2O = (6S)-5,6,7,8-tetrahydrofolate + L-serine. It participates in one-carbon metabolism; tetrahydrofolate interconversion. Its pathway is amino-acid biosynthesis; glycine biosynthesis; glycine from L-serine: step 1/1. In terms of biological role, catalyzes the reversible interconversion of serine and glycine with tetrahydrofolate (THF) serving as the one-carbon carrier. This reaction serves as the major source of one-carbon groups required for the biosynthesis of purines, thymidylate, methionine, and other important biomolecules. Also exhibits THF-independent aldolase activity toward beta-hydroxyamino acids, producing glycine and aldehydes, via a retro-aldol mechanism. In Dehalococcoides mccartyi (strain ATCC BAA-2100 / JCM 16839 / KCTC 5957 / BAV1), this protein is Serine hydroxymethyltransferase.